Reading from the N-terminus, the 512-residue chain is Sucrose-6-phosphate hydrolase (512 aa).

Substrate-binding positions include 40–43 (WMND), Gln59, Trp67, 102–103 (FS), 165–166 (RD), Glu229, and Trp311. The active site involves Asp43.

This sequence belongs to the glycosyl hydrolase 32 family.

It is found in the cytoplasm. It carries out the reaction Hydrolysis of terminal non-reducing beta-D-fructofuranoside residues in beta-D-fructofuranosides.. Its pathway is glycan biosynthesis; sucrose metabolism. This is Sucrose-6-phosphate hydrolase (sacA) from Zymomonas mobilis subsp. mobilis (strain ATCC 10988 / DSM 424 / LMG 404 / NCIMB 8938 / NRRL B-806 / ZM1).